A 402-amino-acid chain; its full sequence is CCA-adding enzyme (402 aa).

ATP contacts are provided by Gly-32 and Arg-35. Residues Gly-32 and Arg-35 each contribute to the CTP site. Residues Asp-45 and Asp-47 each coordinate Mg(2+). Residues Arg-116, Asp-159, Arg-162, Arg-165, and Arg-168 each contribute to the ATP site. The CTP site is built by Arg-116, Asp-159, Arg-162, Arg-165, and Arg-168.

This sequence belongs to the tRNA nucleotidyltransferase/poly(A) polymerase family. Bacterial CCA-adding enzyme type 3 subfamily. As to quaternary structure, homodimer. Requires Mg(2+) as cofactor.

The enzyme catalyses a tRNA precursor + 2 CTP + ATP = a tRNA with a 3' CCA end + 3 diphosphate. It catalyses the reaction a tRNA with a 3' CCA end + 2 CTP + ATP = a tRNA with a 3' CCACCA end + 3 diphosphate. Catalyzes the addition and repair of the essential 3'-terminal CCA sequence in tRNAs without using a nucleic acid template. Adds these three nucleotides in the order of C, C, and A to the tRNA nucleotide-73, using CTP and ATP as substrates and producing inorganic pyrophosphate. tRNA 3'-terminal CCA addition is required both for tRNA processing and repair. Also involved in tRNA surveillance by mediating tandem CCA addition to generate a CCACCA at the 3' terminus of unstable tRNAs. While stable tRNAs receive only 3'-terminal CCA, unstable tRNAs are marked with CCACCA and rapidly degraded. The chain is CCA-adding enzyme from Streptococcus pyogenes serotype M6 (strain ATCC BAA-946 / MGAS10394).